The sequence spans 530 residues: Dual specificity calcium/calmodulin-dependent 3',5'-cyclic nucleotide phosphodiesterase 1A (530 aa).

Calmodulin-binding stretches follow at residues 24–44 (TEKM…QLEK) and 114–137 (EKPR…MYRK). The PDEase domain maps to 142-508 (VGLAYPEAVI…ERWKELAAQG (367 aa)). His-219 acts as the Proton donor in catalysis. His-223, His-259, Asp-260, and Asp-366 together coordinate Zn(2+). Asp-260 contributes to the Mg(2+) binding site. Disordered regions lie at residues 450-471 (TKTP…NDGT) and 502-530 (KELA…ETHS). The segment covering 451–471 (KTPSYGASRRSNMKGTTNDGT) has biased composition (polar residues). Basic and acidic residues predominate over residues 510 to 530 (PDPHKNSDLVNAEEKHAETHS).

Belongs to the cyclic nucleotide phosphodiesterase family. PDE1 subfamily. In terms of assembly, homodimer. Interacts with YWHAZ. Zn(2+) is required as a cofactor. Mg(2+) serves as cofactor.

The catalysed reaction is a nucleoside 3',5'-cyclic phosphate + H2O = a nucleoside 5'-phosphate + H(+). It catalyses the reaction 3',5'-cyclic GMP + H2O = GMP + H(+). It carries out the reaction 3',5'-cyclic AMP + H2O = AMP + H(+). With respect to regulation, type I PDE are activated by the binding of calmodulin in the presence of Ca(2+). Functionally, calcium/calmodulin-dependent cyclic nucleotide phosphodiesterase with a dual specificity for the second messengers cGMP and cAMP, which are key regulators of many important physiological processes. Has a higher efficiency with cGMP compared to cAMP. This is Dual specificity calcium/calmodulin-dependent 3',5'-cyclic nucleotide phosphodiesterase 1A from Bos taurus (Bovine).